The following is a 301-amino-acid chain: Probable splicing factor ECU05_1440 (301 aa).

An RRM 1 domain is found at 1 to 70 (MQIFIGKIPN…APISVERANG (70 aa)). 2 disordered regions span residues 106–140 (PPMR…SFRM) and 255–301 (SKDE…AEND). Basic and acidic residues-rich tracts occupy residues 110-140 (YESR…SFRM) and 255-270 (SKDE…HMRS). The region spanning 182–255 (LKVVFENIAP…HILKTRSYLS (74 aa)) is the RRM 2 domain.

Belongs to the splicing factor SR family.

The protein resides in the nucleus. Plays a role in splicing. This Encephalitozoon cuniculi (strain GB-M1) (Microsporidian parasite) protein is Probable splicing factor ECU05_1440.